We begin with the raw amino-acid sequence, 93 residues long: Acyl carrier protein AcpXL (93 aa).

In terms of domain architecture, Carrier spans 2-88 (STTFDKVAKI…NLCAKIDALV (87 aa)). Serine 37 is modified (O-(pantetheine 4'-phosphoryl)serine).

Post-translationally, 4'-phosphopantetheine is transferred from CoA to a specific serine of apo-ACP by AcpS. This modification is essential for activity because fatty acids are bound in thioester linkage to the sulfhydryl of the prosthetic group.

It is found in the cytoplasm. It participates in glycolipid biosynthesis; KDO(2)-lipid A biosynthesis. Its function is as follows. Carrier of the growing fatty acid chain in fatty acid biosynthesis. Is involved in the transfer of long hydroxylated fatty acids to lipid A. The polypeptide is Acyl carrier protein AcpXL (acpXL) (Mesorhizobium japonicum (strain LMG 29417 / CECT 9101 / MAFF 303099) (Mesorhizobium loti (strain MAFF 303099))).